The primary structure comprises 820 residues: Nuclear pore complex protein Nup93 (820 aa).

The protein belongs to the nucleoporin interacting component (NIC) family.

The protein resides in the nucleus membrane. It is found in the nucleus. The protein localises to the nuclear pore complex. Plays a role in the nuclear pore complex (NPC) assembly and/or maintenance. In Danio rerio (Zebrafish), this protein is Nuclear pore complex protein Nup93 (dye).